We begin with the raw amino-acid sequence, 260 residues long: Adenosine 5'-phosphosulfate reductase (260 aa).

Residues Cys-130, Cys-131, Cys-213, and Cys-216 each contribute to the [4Fe-4S] cluster site. The active-site Nucleophile; cysteine thiosulfonate intermediate is Cys-241.

This sequence belongs to the PAPS reductase family. CysH subfamily. Requires [4Fe-4S] cluster as cofactor.

The protein localises to the cytoplasm. It carries out the reaction [thioredoxin]-disulfide + sulfite + AMP + 2 H(+) = adenosine 5'-phosphosulfate + [thioredoxin]-dithiol. Its pathway is sulfur metabolism; hydrogen sulfide biosynthesis; sulfite from sulfate. In terms of biological role, catalyzes the formation of sulfite from adenosine 5'-phosphosulfate (APS) using thioredoxin as an electron donor. The protein is Adenosine 5'-phosphosulfate reductase of Agrobacterium fabrum (strain C58 / ATCC 33970) (Agrobacterium tumefaciens (strain C58)).